The sequence spans 83 residues: Kunitz-type serine protease inhibitor scutellin-4 (83 aa).

Positions 1–24 are cleaved as a signal peptide; that stretch reads MSSGGLLLLLGLLTLWAELTPVSS. The BPTI/Kunitz inhibitor domain occupies 31–81; it reads CELPADSGPCRGILHAFYYHPVHRTCLGFIYGGCYGNANNFKTIDECKRTC. 3 disulfides stabilise this stretch: C31–C81, C40–C64, and C56–C77.

This sequence belongs to the venom Kunitz-type family. In terms of tissue distribution, expressed by the venom gland.

The protein resides in the secreted. Serine protease inhibitor. The sequence is that of Kunitz-type serine protease inhibitor scutellin-4 from Oxyuranus scutellatus scutellatus (Australian taipan).